We begin with the raw amino-acid sequence, 171 residues long: LIM domain transcription factor LMO4-A (171 aa).

A compositionally biased stretch (polar residues) spans 1–19 (MVNNRSSESTTTAVSSNGS). The interval 1–21 (MVNNRSSESTTTAVSSNGSPP) is disordered. 2 consecutive LIM zinc-binding domains span residues 22–84 (KACA…LFGN) and 86–148 (GACN…GLLN).

As to expression, at the start of gastrulation (stage 10), expressed in the mesodermal marginal zone. Shortly after (stage 11), expression is down-regulated in the dorsal most region. During neurulation, expressed in the neural plate and ventral epidermis. At late neurula stages, also expressed more rostrally, and then in the brain, migrating neural crests and ventral epidermis.

Its function is as follows. Acts as a positive cofactor of GATA transcription factors to establish the identity of the ventral mesoderm during gastrulation. Down-regulation in the dorsal mesoderm is necessary for the proper formation of this territory since, when present, lmo4 may bind ldb1 and restrict the availability of this cofactor for Spemman organizer transcription factors. At neurula stages, suppresses primary neuron differentiation and modulates gene expression at the Isthmic Organizer of the midbrain-hindbrain boundary. In Xenopus laevis (African clawed frog), this protein is LIM domain transcription factor LMO4-A (lmo4-a).